The chain runs to 340 residues: Phosphoribosylformylglycinamidine cyclo-ligase (340 aa).

This sequence belongs to the AIR synthase family.

It localises to the cytoplasm. The enzyme catalyses 2-formamido-N(1)-(5-O-phospho-beta-D-ribosyl)acetamidine + ATP = 5-amino-1-(5-phospho-beta-D-ribosyl)imidazole + ADP + phosphate + H(+). It participates in purine metabolism; IMP biosynthesis via de novo pathway; 5-amino-1-(5-phospho-D-ribosyl)imidazole from N(2)-formyl-N(1)-(5-phospho-D-ribosyl)glycinamide: step 2/2. In Lactococcus lactis subsp. cremoris (strain MG1363), this protein is Phosphoribosylformylglycinamidine cyclo-ligase.